Here is a 273-residue protein sequence, read N- to C-terminus: Aquaporin NIP1-4 (273 aa).

A run of 2 helical transmembrane segments spans residues 59-79 (LLAE…AITV) and 86-106 (VTFP…VYAV). The short motif at 115–117 (NPA) is the NPA 1 element. Helical transmembrane passes span 133–155 (APAY…RLMF), 174–194 (SLVI…AVAT), and 198–218 (AVGH…VLFA). An NPA 2 motif is present at residues 227–229 (NPA). Residues 245-265 (WVYILGPFAGAAAGAWAYSLI) form a helical membrane-spanning segment.

This sequence belongs to the MIP/aquaporin (TC 1.A.8) family. NIP (TC 1.A.8.12) subfamily. Expressed in leaves.

The protein resides in the membrane. Functionally, aquaporins facilitate the transport of water and small neutral solutes across cell membranes. In Oryza sativa subsp. japonica (Rice), this protein is Aquaporin NIP1-4 (NIP1-4).